A 28-amino-acid polypeptide reads, in one-letter code: Dermaseptin-2.2TR (28 aa).

As to expression, expressed by the skin glands.

The protein localises to the secreted. Functionally, has antimicrobial activity. This is Dermaseptin-2.2TR from Phyllomedusa trinitatis (Trinidad leaf frog).